The primary structure comprises 382 residues: Flap endonuclease 1 (382 aa).

The interval 1-105 (MGIKGLNAII…HELTKRSSRR (105 aa)) is N-domain. Mg(2+) is bound at residue Asp-34. Residues Arg-47 and Arg-71 each contribute to the DNA site. Positions 87, 156, 158, 177, and 179 each coordinate Mg(2+). Positions 120–251 (EKMKQERRLV…VTALKLIKTH (132 aa)) are I-domain. Glu-156 is a binding site for DNA. Positions 229 and 231 each coordinate DNA. Mg(2+) is bound at residue Asp-231. An interaction with PCNA region spans residues 339–347 (IQGRLDGFF). Residues 358 to 382 (AAAAKRAQENKKLNKNKNKVTKGRR) form a disordered region. Over residues 370–382 (LNKNKNKVTKGRR) the composition is skewed to basic residues.

It belongs to the XPG/RAD2 endonuclease family. FEN1 subfamily. Interacts with PCNA. Three molecules of RAD27 bind to one PCNA trimer with each molecule binding to one PCNA monomer. PCNA stimulates the nuclease activity without altering cleavage specificity. It depends on Mg(2+) as a cofactor. Phosphorylated. Phosphorylation upon DNA damage induces relocalization to the nuclear plasma.

The protein resides in the nucleus. It localises to the nucleolus. It is found in the nucleoplasm. The protein localises to the mitochondrion. In terms of biological role, structure-specific nuclease with 5'-flap endonuclease and 5'-3' exonuclease activities involved in DNA replication and repair. During DNA replication, cleaves the 5'-overhanging flap structure that is generated by displacement synthesis when DNA polymerase encounters the 5'-end of a downstream Okazaki fragment. It enters the flap from the 5'-end and then tracks to cleave the flap base, leaving a nick for ligation. Also involved in the long patch base excision repair (LP-BER) pathway, by cleaving within the apurinic/apyrimidinic (AP) site-terminated flap. Acts as a genome stabilization factor that prevents flaps from equilibrating into structures that lead to duplications and deletions. Also possesses 5'-3' exonuclease activity on nicked or gapped double-stranded DNA, and exhibits RNase H activity. Also involved in replication and repair of rDNA and in repairing mitochondrial DNA. This Saccharomyces cerevisiae (strain YJM789) (Baker's yeast) protein is Flap endonuclease 1.